Here is a 193-residue protein sequence, read N- to C-terminus: Dirigent protein 11 (193 aa).

A signal peptide spans 1 to 33; the sequence is MLQITNMATPFLLLLLPLIFSTVLLLTITVTQS. N-linked (GlcNAc...) asparagine glycans are attached at residues Asn78 and Asn136.

It belongs to the plant dirigent protein family. In terms of assembly, homodimer.

The protein resides in the secreted. It is found in the extracellular space. Its subcellular location is the apoplast. In terms of biological role, dirigent proteins impart stereoselectivity on the phenoxy radical-coupling reaction, yielding optically active lignans from two molecules of coniferyl alcohol in the biosynthesis of lignans, flavonolignans, and alkaloids and thus plays a central role in plant secondary metabolism. The protein is Dirigent protein 11 (DIR11) of Arabidopsis thaliana (Mouse-ear cress).